Consider the following 351-residue polypeptide: Anthranilate phosphoribosyltransferase (351 aa).

5-phospho-alpha-D-ribose 1-diphosphate-binding positions include Gly-85, 88–89 (GD), Ser-93, 95–98 (NIST), 113–121 (KHGNRAASS), and Thr-125. Gly-85 lines the anthranilate pocket. Ser-97 is a binding site for Mg(2+). Position 116 (Asn-116) interacts with anthranilate. Arg-171 is a binding site for anthranilate. The Mg(2+) site is built by Asp-229 and Glu-230.

It belongs to the anthranilate phosphoribosyltransferase family. In terms of assembly, homodimer. The cofactor is Mg(2+).

It carries out the reaction N-(5-phospho-beta-D-ribosyl)anthranilate + diphosphate = 5-phospho-alpha-D-ribose 1-diphosphate + anthranilate. It functions in the pathway amino-acid biosynthesis; L-tryptophan biosynthesis; L-tryptophan from chorismate: step 2/5. In terms of biological role, catalyzes the transfer of the phosphoribosyl group of 5-phosphorylribose-1-pyrophosphate (PRPP) to anthranilate to yield N-(5'-phosphoribosyl)-anthranilate (PRA). This is Anthranilate phosphoribosyltransferase from Saccharopolyspora erythraea (strain ATCC 11635 / DSM 40517 / JCM 4748 / NBRC 13426 / NCIMB 8594 / NRRL 2338).